A 29-amino-acid chain; its full sequence is Phospholemman-like protein (29 aa).

It belongs to the FXYD family. In terms of processing, phosphorylated by protein kinase C.

Its subcellular location is the membrane. Functionally, induces a hyperpolarization-activated chloride current when expressed in Xenopus oocytes. The polypeptide is Phospholemman-like protein (Scyliorhinus canicula (Small-spotted catshark)).